Consider the following 360-residue polypeptide: Protein phosphatase 1L (360 aa).

Residues 1 to 25 (MIEDTMTLLSLLGRIMRYFLLRPET) lie on the Extracellular side of the membrane. A helical transmembrane segment spans residues 26 to 42 (LFLLCISLALWSYFFHT). Residues 43 to 360 (DEVKTIVKSS…FRNSSKTEEQ (318 aa)) lie on the Cytoplasmic side of the membrane. The region spanning 92-351 (NVAVYSIQGR…DNITVMVVKF (260 aa)) is the PPM-type phosphatase domain. Mn(2+) contacts are provided by aspartate 128, glycine 129, aspartate 302, and aspartate 342.

This sequence belongs to the PP2C family. In terms of assembly, interacts with MAP3K7/TAK1 and MAP3K5. It depends on Mg(2+) as a cofactor. Mn(2+) serves as cofactor.

Its subcellular location is the membrane. It carries out the reaction O-phospho-L-seryl-[protein] + H2O = L-seryl-[protein] + phosphate. It catalyses the reaction O-phospho-L-threonyl-[protein] + H2O = L-threonyl-[protein] + phosphate. Acts as a suppressor of the SAPK signaling pathways by associating with and dephosphorylating MAP3K7/TAK1 and MAP3K5, and by attenuating the association between MAP3K7/TAK1 and MAP2K4 or MAP2K6. The sequence is that of Protein phosphatase 1L (PPM1L) from Bos taurus (Bovine).